We begin with the raw amino-acid sequence, 879 residues long: Alanine--tRNA ligase (879 aa).

4 residues coordinate Zn(2+): His-570, His-574, Cys-672, and His-676.

It belongs to the class-II aminoacyl-tRNA synthetase family. The cofactor is Zn(2+).

It is found in the cytoplasm. The catalysed reaction is tRNA(Ala) + L-alanine + ATP = L-alanyl-tRNA(Ala) + AMP + diphosphate. Catalyzes the attachment of alanine to tRNA(Ala) in a two-step reaction: alanine is first activated by ATP to form Ala-AMP and then transferred to the acceptor end of tRNA(Ala). Also edits incorrectly charged Ser-tRNA(Ala) and Gly-tRNA(Ala) via its editing domain. The polypeptide is Alanine--tRNA ligase (Nitratidesulfovibrio vulgaris (strain ATCC 29579 / DSM 644 / CCUG 34227 / NCIMB 8303 / VKM B-1760 / Hildenborough) (Desulfovibrio vulgaris)).